A 406-amino-acid chain; its full sequence is NADH-ubiquinone oxidoreductase 49 kDa subunit (406 aa).

The protein belongs to the complex I 49 kDa subunit family. As to quaternary structure, complex I is composed of 45 different subunits. Component of the iron-sulfur (IP) fragment of the enzyme.

It is found in the mitochondrion inner membrane. The catalysed reaction is a ubiquinone + NADH + 5 H(+)(in) = a ubiquinol + NAD(+) + 4 H(+)(out). Core subunit of the mitochondrial membrane respiratory chain NADH dehydrogenase (Complex I) that is believed to belong to the minimal assembly required for catalysis. Complex I functions in the transfer of electrons from NADH to the respiratory chain. The immediate electron acceptor for the enzyme is believed to be ubiquinone. The polypeptide is NADH-ubiquinone oxidoreductase 49 kDa subunit (nad7) (Dictyostelium discoideum (Social amoeba)).